The sequence spans 1372 residues: Collagen alpha-2(I) chain (1372 aa).

Positions 1–22 (MLSFVDTRTLLLLAVTSCLATC) are cleaved as a signal peptide. Gln23 carries the post-translational modification Pyrrolidone carboxylic acid. The propeptide at 23 to 85 (QYLQSGSVRK…PPGLTGNFAA (63 aa)) is N-terminal propeptide. The segment at 28–1135 (GSVRKGPTGD…DQPRSQPSLR (1108 aa)) is disordered. Residues 59-77 (MGPPGPPGSPGPPGSPAPP) are compositionally biased toward pro residues. At Lys90 the chain carries Allysine. Residues 95–146 (GPGPMGLMGPRGPPGAVGAPGPQGFQGPAGEPGEPGQTGPAGPRGPAGSPGK) show a composition bias toward low complexity. Residues 147-161 (AGEDGHPGKPGRPGE) are compositionally biased toward basic and acidic residues. Lys183 carries the 5-hydroxylysine; alternate modification. Lys183 is a glycosylation site (O-linked (Gal...) hydroxylysine; alternate). Low complexity-rich tracts occupy residues 231-260 (VGAP…SAGP), 285-299 (AGPR…LSGP), 306-327 (PGTN…AGAP), 336-351 (PGPA…RGLV), 390-416 (PGEA…LPGA), 476-495 (LPGI…RGEA), and 519-537 (PGLA…NGAQ). The segment covering 544–553 (GVQGGKGEQG) has biased composition (gly residues). Low complexity predominate over residues 600 to 639 (PGESGAAGPSGPIGSRGPSGAPGPDGNKGEAGAVGAPGSA). Gly residues predominate over residues 640-649 (GASGPGGLPG). Low complexity-rich tracts occupy residues 681–716 (RGIP…PRGS) and 725–743 (PAGP…QPGA). Residues 744–753 (KGEKGTKGPK) show a composition bias toward basic and acidic residues. Residues 755–771 (ENGIVGPTGSVGAAGPS) show a composition bias toward low complexity. Residues 781-790 (GSRGDGGPPG) show a composition bias toward gly residues. Composition is skewed to low complexity over residues 792-801 (TGFPGAAGRT), 855-882 (SGEP…LGLP), 905-927 (ISGP…NGAP), 957-978 (PGSI…VGPA), and 987-1007 (PGPA…PSGP). Residues 1011–1022 (RGDKGEPGDKGH) are compositionally biased toward basic and acidic residues. Pro residues predominate over residues 1095 to 1107 (AGPPGPPGPPGPP). Residues 1126 to 1372 (DQPRSQPSLR…RVEVGPVCFK (247 aa)) constitute a propeptide, C-terminal propeptide. Residues 1139–1372 (YEVDATLKSL…RVEVGPVCFK (234 aa)) form the Fibrillar collagen NC1 domain. 3 cysteine pairs are disulfide-bonded: Cys1169–Cys1201, Cys1209–Cys1370, and Cys1278–Cys1323. Residues Asp1187, Asn1189, Gln1190, Cys1192, and Asp1195 each coordinate Ca(2+). A glycan (N-linked (GlcNAc...) asparagine) is linked at Asn1273.

The protein belongs to the fibrillar collagen family. In terms of assembly, trimers of one alpha 2(I) and two alpha 1(I) chains. Interacts (via C-terminus) with TMEM131 (via PapD-L domain); the interaction is direct and is involved in assembly and TRAPPIII ER-to-Golgi transport complex-dependent secretion of collagen. Prolines at the third position of the tripeptide repeating unit (G-X-Y) are hydroxylated in some or all of the chains. As to expression, expressed in kidney glomeruli.

The protein resides in the secreted. It is found in the extracellular space. Its subcellular location is the extracellular matrix. Type I collagen is a member of group I collagen (fibrillar forming collagen). This Mus musculus (Mouse) protein is Collagen alpha-2(I) chain (Col1a2).